The chain runs to 552 residues: MSGRAVLVDVRTGEEIATAVKEYTHGVIDRELPVSKRKLPRDWALQHPADYIEVLEETIPSLLKQSKADPKEIIGIGIDFTACTILPVDENGTPLCMREEYASEPHSYVKLWKHHAAQEQANRLNQIAEERNEPFLQTYGGKISSEWLVPKVMQIAEEAPDIYDAAAEIMEAADWIVYMLCGTRKRNNCTAGYKAIWNNKSGYPSDDFFASLHPKLKNIVREKLTEDIYSVGEKAGGLTEEMAGKTGLLAGTAVAVANVDAHVSVPAVGITEPGKMLMIMGTSTCHMLLGEDVRMVPGMCGVVEDGILPGYVGYEAGQSCVGDHFHWLIQHFVPEAYLKEAEAEGISIYELLSQKAGSLQIGESGLLALDWWNGNRSTLVDADLTGMLLGMTLATKPEEIYRALVEATAYGTRIIIETFRQSGVPIEELYAAGGIAEKNPFIMQVYADVTNMEIKISGSPQAPALGSAIFGALAAGSMNGGYDHIEEAVAHMGKIKDKTYKPIPENVSLYDQLYAEYKELYTYFGKQNNVMKRLKKLKNIQSLSSDTGKAMA.

This sequence belongs to the ribulokinase family.

It carries out the reaction D-ribulose + ATP = D-ribulose 5-phosphate + ADP + H(+). It catalyses the reaction L-ribulose + ATP = L-ribulose 5-phosphate + ADP + H(+). It participates in carbohydrate degradation; L-arabinose degradation via L-ribulose; D-xylulose 5-phosphate from L-arabinose (bacterial route): step 2/3. This chain is Ribulokinase, found in Bacillus licheniformis (strain ATCC 14580 / DSM 13 / JCM 2505 / CCUG 7422 / NBRC 12200 / NCIMB 9375 / NCTC 10341 / NRRL NRS-1264 / Gibson 46).